Reading from the N-terminus, the 113-residue chain is UPF0122 protein LAF_1235 (113 aa).

It belongs to the UPF0122 family.

In terms of biological role, might take part in the signal recognition particle (SRP) pathway. This is inferred from the conservation of its genetic proximity to ftsY/ffh. May be a regulatory protein. This is UPF0122 protein LAF_1235 from Limosilactobacillus fermentum (strain NBRC 3956 / LMG 18251) (Lactobacillus fermentum).